Reading from the N-terminus, the 737-residue chain is uncharacterized protein (737 aa).

The next 7 helical transmembrane spans lie at 11-31 (LSLL…LRPL), 36-56 (ETKH…LTFF), 60-80 (WFVT…ILFY), 118-138 (TLLF…WVIY), 142-162 (ILFF…FTPY), 164-184 (ATFA…LLYL), and 200-220 (VLKW…FGLA). Residues 556-611 (PAQFTSSDTKDSGSDSSSSPKKAKEKQKEEKKQPQKEEKQKEKREPAVSKKPSASH) are disordered. Positions 581 to 603 (KQKEEKKQPQKEEKQKEKREPAV) are enriched in basic and acidic residues. A helical membrane pass occupies residues 618–638 (LYAALAVLAVLLVAAVLLYVF).

Its subcellular location is the cell membrane. This is an uncharacterized protein from Bacillus subtilis (strain 168).